Here is a 351-residue protein sequence, read N- to C-terminus: Ferredoxin--NADP reductase (351 aa).

Positions 44, 52, 57, 97, 132, 296, and 337 each coordinate FAD.

It belongs to the ferredoxin--NADP reductase type 2 family. As to quaternary structure, homodimer. FAD serves as cofactor.

The enzyme catalyses 2 reduced [2Fe-2S]-[ferredoxin] + NADP(+) + H(+) = 2 oxidized [2Fe-2S]-[ferredoxin] + NADPH. The polypeptide is Ferredoxin--NADP reductase (Paraburkholderia phymatum (strain DSM 17167 / CIP 108236 / LMG 21445 / STM815) (Burkholderia phymatum)).